The chain runs to 386 residues: S-adenosylmethionine synthase (386 aa).

Residue His16 coordinates ATP. Asp18 is a binding site for Mg(2+). K(+) is bound at residue Glu44. L-methionine contacts are provided by Glu57 and Gln100. A flexible loop region spans residues 100–110 (QSSDIAQGVDR). ATP is bound by residues 165–167 (DAK), Asp240, 246–247 (RK), Ala263, and Lys267. Asp240 is a binding site for L-methionine. Position 271 (Lys271) interacts with L-methionine.

It belongs to the AdoMet synthase family. Homotetramer; dimer of dimers. Requires Mg(2+) as cofactor. K(+) serves as cofactor.

It is found in the cytoplasm. It catalyses the reaction L-methionine + ATP + H2O = S-adenosyl-L-methionine + phosphate + diphosphate. It functions in the pathway amino-acid biosynthesis; S-adenosyl-L-methionine biosynthesis; S-adenosyl-L-methionine from L-methionine: step 1/1. In terms of biological role, catalyzes the formation of S-adenosylmethionine (AdoMet) from methionine and ATP. The overall synthetic reaction is composed of two sequential steps, AdoMet formation and the subsequent tripolyphosphate hydrolysis which occurs prior to release of AdoMet from the enzyme. This Francisella philomiragia subsp. philomiragia (strain ATCC 25017 / CCUG 19701 / FSC 153 / O#319-036) protein is S-adenosylmethionine synthase.